The chain runs to 317 residues: ADP-L-glycero-D-manno-heptose-6-epimerase (317 aa).

NADP(+) contacts are provided by residues 10-11 (FI), 31-32 (DD), lysine 38, lysine 53, 75-79 (QGACS), and asparagine 92. Tyrosine 139 acts as the Proton acceptor in catalysis. NADP(+) is bound at residue lysine 143. A substrate-binding site is contributed by asparagine 166. 2 residues coordinate NADP(+): valine 167 and lysine 175. The active-site Proton acceptor is the lysine 175. Residues glycine 177, histidine 184, 198 to 201 (FQGH), arginine 211, and tyrosine 275 each bind substrate.

It belongs to the NAD(P)-dependent epimerase/dehydratase family. HldD subfamily. Homopentamer. NADP(+) serves as cofactor.

It carries out the reaction ADP-D-glycero-beta-D-manno-heptose = ADP-L-glycero-beta-D-manno-heptose. It functions in the pathway nucleotide-sugar biosynthesis; ADP-L-glycero-beta-D-manno-heptose biosynthesis; ADP-L-glycero-beta-D-manno-heptose from D-glycero-beta-D-manno-heptose 7-phosphate: step 4/4. In terms of biological role, catalyzes the interconversion between ADP-D-glycero-beta-D-manno-heptose and ADP-L-glycero-beta-D-manno-heptose via an epimerization at carbon 6 of the heptose. The sequence is that of ADP-L-glycero-D-manno-heptose-6-epimerase from Shewanella loihica (strain ATCC BAA-1088 / PV-4).